We begin with the raw amino-acid sequence, 160 residues long: Small ribosomal subunit protein uS17z (160 aa).

Belongs to the universal ribosomal protein uS17 family.

It localises to the cytoplasm. The chain is Small ribosomal subunit protein uS17z (RPS11A) from Arabidopsis thaliana (Mouse-ear cress).